The sequence spans 476 residues: MEIPHKATVLVIGGGPGGSYTASALAREGIDIVLLEADVFPRFIDLDETFVNYGFVRKNASHGSLADTDFILQPGADTFAWNVVRSECDDLMFKHASNSGARAFDGVKVTAIEFDPLDESAIDDHPGRPVSASWKAKDGRTGSISFDYLVDASGRAGIASTKYLKSRTYNSYLKNVASWGYWRGATPYGVGTSVEGQPYFEALQDGSGWVWFIPLHNGTTSVGVVMNQELATQKKKSSTVTSSRAFYLESVEGARVISQLLQPANLDGEIKQASDWSYNASSYGSPYLRIVGDAGAFIDPYFSSGVHLAVSGGLSAAVSIAASIRGDCPEHTAWQWHSQGVANRYGRFLLVVLGATKQIRARDSPVLNSEGQDGFDDAFAVIRPVIQGTADVQGKVSAREVLDAVTFSTNAVRPSAGGQNVVLEESSRSLRSQVEQEMGDVANSLAKAYKDTDVYEGLMARLERGSLGLKAVGVMG.

Glycine 14 and glycine 17 together coordinate FAD. Chloride-binding residues include serine 304 and glycine 305. Position 306 (valine 306) interacts with FAD.

It belongs to the flavin-dependent halogenase family.

It catalyses the reaction ochratoxin B + FADH2 + chloride + O2 = ochratoxin A + FAD + 2 H2O. It functions in the pathway mycotoxin biosynthesis. In terms of biological role, flavin-dependent halogenase; part of the gene cluster that mediates the biosynthesis of ochratoxin A (OTA), a mycotoxin composed of a chlorinated type I polyketide dihydroisocoumarin moiety linked to L-phenylalanine, and demonstrated to have nephrotoxic, immunotoxic, genotoxic, neurotoxic, and teratogenic properties. OtaD chlorinates ochratoxin B (OTB) at the C-5 position to form OTA. The pathway begins with the highly reducing polyketide synthase otaA that catalyzes the formation of the isocoumarin group during the initial stages of biosynthesis, starting from one acetate and 4 malonate units, to originate the characteristic pentaketide skeleton 7-methylmellein (7-MM) of the OTA molecule. The newly identified cyclase otaY might be involved in the polyketide cyclization reaction during the initial steps of the OTA biosynthesis. 7-MM is then oxidized into 7-carboxymellein (also called ochratoxin beta) by the cytochrome P450 monooxygenase otaC. The NRPS encoded by the otaB gene is involved in the linking of phenylalanine to the dihydroisocoumarin ring. The reaction catalyzed by NRPS results in the production of ochratoxin B (OTB), which is the non-chlorinated analog of OTA and which subsequently serves as the substrate of the halogenase otaD for chlorination activity to form the final molecular structure of OTA, containing a chlorine atom in the C-5 position of the molecule. The protein is Flavin-dependent halogenase otaD of Aspergillus niger (strain ATCC MYA-4892 / CBS 513.88 / FGSC A1513).